The primary structure comprises 915 residues: Protein O-mannosyl-transferase TMTC3 (915 aa).

At 1-8 the chain is on the cytoplasmic side; it reads MANINLKE. The chain crosses the membrane as a helical span at residues 9 to 29; it reads ITLIVGVVTACYWNSLFCGFV. Residues 30-93 lie on the Extracellular side of the membrane; the sequence is FDDVSAILDN…LSELKPMSYH (64 aa). Residues 94 to 114 traverse the membrane as a helical segment; the sequence is LLNMIFHAVVSVIFLKVCKLF. The Cytoplasmic portion of the chain corresponds to 115–120; sequence LDNKSS. A run of 2 helical transmembrane segments spans residues 121-139 and 140-158; these read VIAS…AVTG and VVGR…AFLS. The Cytoplasmic portion of the chain corresponds to 159-166; it reads YTRSKGPD. A helical membrane pass occupies residues 167–187; it reads NSIIWTPIALTVFLVAVATLC. At 188-193 the chain is on the extracellular side; that stretch reads KEQGIT. The chain crosses the membrane as a helical span at residues 194-214; it reads VVGICCVYEVFIAQGYTLPLL. The Cytoplasmic portion of the chain corresponds to 215-231; that stretch reads CTTAGQFLRGKGSIPFS. Residues 232-252 form a helical membrane-spanning segment; the sequence is MLQTLVKLIVLMFSTLLLVVI. Residues 253-317 are Extracellular-facing; sequence RVQVIQSQLP…TIPLIESLLD (65 aa). Residues 318–338 form a helical membrane-spanning segment; sequence IRNLATFTFFCFLGMLGVFSI. Over 339 to 353 the chain is Cytoplasmic; it reads RYSGDSSKTVLMALC. A helical membrane pass occupies residues 354–374; that stretch reads LMALPFIPASNLFFPVGFVVA. At 375–376 the chain is on the extracellular side; it reads ER. Residues 377–397 form a helical membrane-spanning segment; that stretch reads VLYVPSMGFCILVAHGWQKIS. Topologically, residues 398–404 are cytoplasmic; that stretch reads TKSVFKK. A helical transmembrane segment spans residues 405–423; that stretch reads LSWICLSMVILTHSLKTFH. The Extracellular segment spans residues 424 to 915; it reads RNWDWESEYT…EEIERILNGE (492 aa). 9 TPR repeats span residues 446–479, 480–513, 529–562, 563–596, 597–631, 669–702, 703–736, 738–771, and 772–805; these read AKLW…QPDD, IGAH…MPQI, NVYI…RPDF, KQAY…DRNN, ADLW…NPKH, ANGY…QADF, RSAL…YPDH, KGLI…DPSN, and VQGK…APHE. Asparagine 494 carries N-linked (GlcNAc...) asparagine glycosylation. Tyrosine 503 carries the phosphotyrosine modification. Asparagine 541 is a glycosylation site (N-linked (GlcNAc...) asparagine). The interval 848-892 is disordered; sequence KEIRGESRQTQIVKTSDNKSQSKSNKQLGKNGDEETPHKTTKDIK. N-linked (GlcNAc...) asparagine glycosylation is present at asparagine 865. Residues 865 to 874 are compositionally biased toward low complexity; the sequence is NKSQSKSNKQ. Positions 878–892 are enriched in basic and acidic residues; that stretch reads NGDEETPHKTTKDIK.

The protein belongs to the TMTC family.

It localises to the membrane. Its subcellular location is the endoplasmic reticulum. It catalyses the reaction a di-trans,poly-cis-dolichyl beta-D-mannosyl phosphate + L-seryl-[protein] = 3-O-(alpha-D-mannosyl)-L-seryl-[protein] + a di-trans,poly-cis-dolichyl phosphate + H(+). The enzyme catalyses a di-trans,poly-cis-dolichyl beta-D-mannosyl phosphate + L-threonyl-[protein] = 3-O-(alpha-D-mannosyl)-L-threonyl-[protein] + a di-trans,poly-cis-dolichyl phosphate + H(+). The protein operates within protein modification; protein glycosylation. Functionally, transfers mannosyl residues to the hydroxyl group of serine or threonine residues. The 4 members of the TMTC family are O-mannosyl-transferases dedicated primarily to the cadherin superfamily, each member seems to have a distinct role in decorating the cadherin domains with O-linked mannose glycans at specific regions. Also acts as O-mannosyl-transferase on other proteins such as PDIA3. Involved in the positive regulation of proteasomal protein degradation in the endoplasmic reticulum (ER), and the control of ER stress response. The sequence is that of Protein O-mannosyl-transferase TMTC3 from Homo sapiens (Human).